We begin with the raw amino-acid sequence, 117 residues long: Non-specific lipid-transfer protein 3 (117 aa).

Residues M1 to A25 form the signal peptide. 4 cysteine pairs are disulfide-bonded: C29/C76, C39/C53, C54/C99, and C74/C113.

The protein belongs to the plant LTP family.

Functionally, plant non-specific lipid-transfer proteins transfer phospholipids as well as galactolipids across membranes. May play a role in wax or cutin deposition in the cell walls of expanding epidermal cells and certain secretory tissues. The sequence is that of Non-specific lipid-transfer protein 3 (LTP3) from Brassica napus (Rape).